Reading from the N-terminus, the 233-residue chain is Large ribosomal subunit protein uL1 (233 aa).

The protein belongs to the universal ribosomal protein uL1 family. In terms of assembly, part of the 50S ribosomal subunit.

Its function is as follows. Binds directly to 23S rRNA. The L1 stalk is quite mobile in the ribosome, and is involved in E site tRNA release. Functionally, protein L1 is also a translational repressor protein, it controls the translation of the L11 operon by binding to its mRNA. This is Large ribosomal subunit protein uL1 from Hamiltonella defensa subsp. Acyrthosiphon pisum (strain 5AT).